The primary structure comprises 524 residues: GMP synthase [glutamine-hydrolyzing] (524 aa).

Residues 9 to 207 (RILILDFGSQ…VIHICQCIPN (199 aa)) enclose the Glutamine amidotransferase type-1 domain. The active-site Nucleophile is the cysteine 86. Active-site residues include histidine 181 and glutamate 183. Residues 208 to 399 (WTTKHIIEDS…LGLPADLIYR (192 aa)) form the GMPS ATP-PPase domain. 235–241 (SGGVDSA) serves as a coordination point for ATP.

In terms of assembly, homodimer.

It carries out the reaction XMP + L-glutamine + ATP + H2O = GMP + L-glutamate + AMP + diphosphate + 2 H(+). It participates in purine metabolism; GMP biosynthesis; GMP from XMP (L-Gln route): step 1/1. Functionally, catalyzes the synthesis of GMP from XMP. This chain is GMP synthase [glutamine-hydrolyzing], found in Coxiella burnetii (strain CbuG_Q212) (Coxiella burnetii (strain Q212)).